We begin with the raw amino-acid sequence, 191 residues long: Protein 2 in picA locus (191 aa).

Belongs to the acyltransferase 3 family.

The protein resides in the cell membrane. In terms of biological role, seems to regulate the surface properties of the bacterium in the presence of plant cells or plant cell extracts. This Rhizobium radiobacter (Agrobacterium tumefaciens) protein is Protein 2 in picA locus.